The sequence spans 386 residues: Protein-glutamate methylesterase/protein-glutamine glutaminase 3 (386 aa).

The region spanning 4–121 (KVLVVDDSGF…SRNPQKVKQL (118 aa)) is the Response regulatory domain. D55 carries the post-translational modification 4-aspartylphosphate. Residues 132 to 194 (SNRRSSGFGS…SHAPAHPTTS (63 aa)) show a composition bias toward low complexity. The disordered stretch occupies residues 132 to 197 (SNRRSSGFGS…PAHPTTSGTA (66 aa)). The CheB-type methylesterase domain occupies 191–383 (PTTSGTAKRK…LDDIGRHLVE (193 aa)). Catalysis depends on residues S210, H237, and D330.

The protein belongs to the CheB family. In terms of processing, phosphorylated by CheA. Phosphorylation of the N-terminal regulatory domain activates the methylesterase activity.

Its subcellular location is the cytoplasm. The catalysed reaction is [protein]-L-glutamate 5-O-methyl ester + H2O = L-glutamyl-[protein] + methanol + H(+). It carries out the reaction L-glutaminyl-[protein] + H2O = L-glutamyl-[protein] + NH4(+). Involved in chemotaxis. Part of a chemotaxis signal transduction system that modulates chemotaxis in response to various stimuli. Catalyzes the demethylation of specific methylglutamate residues introduced into the chemoreceptors (methyl-accepting chemotaxis proteins or MCP) by CheR. Also mediates the irreversible deamidation of specific glutamine residues to glutamic acid. The polypeptide is Protein-glutamate methylesterase/protein-glutamine glutaminase 3 (Pseudomonas syringae pv. syringae (strain B728a)).